Here is a 394-residue protein sequence, read N- to C-terminus: Gap junction gamma-1 protein (394 aa).

Over 1–22 the chain is Cytoplasmic; that stretch reads MSWSFLTRLLEEIHNHSTFVGK. The chain crosses the membrane as a helical span at residues 23-45; it reads IWLSVLIVFRIVLTAVGGESIYY. Residues 46 to 75 are Extracellular-facing; that stretch reads DEQSKFVCNTEQPGCENVCYDAFAPLSHVR. A helical membrane pass occupies residues 76 to 95; sequence FWVFQIILVATPSVMYLGYA. Topologically, residues 96 to 176 are cytoplasmic; that stretch reads IHKIARMVEH…RRIREDGLMR (81 aa). Residues 177–199 traverse the membrane as a helical segment; it reads IYVLQLLVRATFEVGFLIGQYLL. Topologically, residues 200–229 are extracellular; it reads YGFEVSPVFVCSRKPCPHKIDCFISRPTEK. The chain crosses the membrane as a helical span at residues 230-252; sequence TIFLLIMYGVSCMCLLLNVWEML. Residues 253–394 lie on the Cytoplasmic side of the membrane; sequence HLGFGTIRDT…SGDGKNSVWI (142 aa). Positions 354–394 are disordered; it reads IQAYNNQNNPGSSSREKKSKAGSNKSSASSKSGDGKNSVWI. Over residues 356-366 the composition is skewed to polar residues; it reads AYNNQNNPGSS. Residues 374 to 394 are compositionally biased toward low complexity; it reads AGSNKSSASSKSGDGKNSVWI.

It belongs to the connexin family. Gamma-type subfamily. As to quaternary structure, a connexon is composed of a hexamer of connexins. In terms of tissue distribution, mostly in heart and stomach.

Its subcellular location is the cell membrane. It localises to the cell junction. The protein localises to the gap junction. In terms of biological role, one gap junction consists of a cluster of closely packed pairs of transmembrane channels, the connexons, through which materials of low MW diffuse from one cell to a neighboring cell. The protein is Gap junction gamma-1 protein (GJC1) of Gallus gallus (Chicken).